We begin with the raw amino-acid sequence, 247 residues long: Ribosomal RNA small subunit methyltransferase J (247 aa).

S-adenosyl-L-methionine-binding positions include 106-107, 122-123, and Asp168; these read RD and ER.

Belongs to the methyltransferase superfamily. RsmJ family.

It localises to the cytoplasm. It catalyses the reaction guanosine(1516) in 16S rRNA + S-adenosyl-L-methionine = N(2)-methylguanosine(1516) in 16S rRNA + S-adenosyl-L-homocysteine + H(+). In terms of biological role, specifically methylates the guanosine in position 1516 of 16S rRNA. The protein is Ribosomal RNA small subunit methyltransferase J of Alcanivorax borkumensis (strain ATCC 700651 / DSM 11573 / NCIMB 13689 / SK2).